Here is a 114-residue protein sequence, read N- to C-terminus: Large ribosomal subunit protein uL22 (114 aa).

It belongs to the universal ribosomal protein uL22 family. As to quaternary structure, part of the 50S ribosomal subunit.

In terms of biological role, this protein binds specifically to 23S rRNA; its binding is stimulated by other ribosomal proteins, e.g. L4, L17, and L20. It is important during the early stages of 50S assembly. It makes multiple contacts with different domains of the 23S rRNA in the assembled 50S subunit and ribosome. The globular domain of the protein is located near the polypeptide exit tunnel on the outside of the subunit, while an extended beta-hairpin is found that lines the wall of the exit tunnel in the center of the 70S ribosome. This Ehrlichia chaffeensis (strain ATCC CRL-10679 / Arkansas) protein is Large ribosomal subunit protein uL22.